The chain runs to 1789 residues: Protein sprint (1789 aa).

6 disordered regions span residues 53 to 120, 140 to 190, 218 to 237, 261 to 317, 329 to 378, and 401 to 460; these read TTAN…AHPP, TTTA…DLAN, PLWN…HPTG, QRMH…QAGL, LNNN…DADD, and RRSR…PCDL. Residues 82-114 show a composition bias toward low complexity; sequence SINNNKNNNISNKNNNNNNNNNNNINNNNNNNN. The span at 140-149 shows a compositional bias: polar residues; that stretch reads TTTANQLQQQ. The segment covering 176–185 has biased composition (acidic residues); the sequence is PSEEDGDTDA. Over residues 223 to 233 the composition is skewed to polar residues; that stretch reads RNGNGSTTTHC. A compositionally biased stretch (low complexity) spans 295–317; sequence NNNNINNNHNGQQSQKSQQQAGL. Positions 337–361 are enriched in polar residues; it reads QPGSMTPASNRTGLDSNQNQKQNLN. Over residues 409–418 the composition is skewed to low complexity; sequence QSRTSLVSSS. The segment covering 428–445 has biased composition (acidic residues); the sequence is TSSEDDEEEPVEAEDEGE. The region spanning 473–566 is the SH2 domain; it reads WFLPGIQRSG…ELPVQLMLPR (94 aa). 7 disordered regions span residues 632–689, 744–787, 852–918, 969–1006, 1040–1067, 1094–1123, and 1138–1160; these read FFSD…SGGQ, TAPE…SANG, GECK…ILES, DLLA…QSLL, AAED…QGSP, RSQM…MLQP, and PKPK…KRAR. A compositionally biased stretch (pro residues) spans 639–649; that stretch reads KPPPTGAPPLP. Positions 671 to 686 are enriched in low complexity; that stretch reads TPSDTTNSSLSSFTTS. Residues 857–868 are compositionally biased toward polar residues; the sequence is TLSSQGSSSNDS. Over residues 903 to 914 the composition is skewed to basic and acidic residues; it reads AGKESQHYKESD. Residues 974–984 are compositionally biased toward low complexity; sequence TPSTPTPTQQS. 2 stretches are compositionally biased toward polar residues: residues 994 to 1006 and 1048 to 1065; these read TATP…QSLL and TTPT…SKQG. A compositionally biased stretch (low complexity) spans 1143-1154; sequence SQQQQQSQQQQQ. A VPS9 domain is found at 1531-1673; that stretch reads RSEDIQLLAQ…LKTFMASEGE (143 aa). Residues 1689-1777 enclose the Ras-associating domain; sequence CSSVLRVIIP…CMLAYKRIDA (89 aa).

The protein belongs to the RIN (Ras interaction/interference) family. As to expression, in late cellular blastoderm embryos, it is expressed in the posterior end. Then, as development proceeds, it is expressed in the developing midgut, amnioserosa and in a specific subset of CNS neurons. Isoform 1 is expressed earlier in developing midgut and amnioserosa, but is not expressed in the CNS.

Its function is as follows. Potential Ras effector protein. May function as a guanine nucleotide exchange (GEF), by exchanging bound GDP for free GTP. This is Protein sprint (spri) from Drosophila melanogaster (Fruit fly).